A 392-amino-acid chain; its full sequence is L-serine phosphate decarboxylase (392 aa).

The required for catalytic activity stretch occupies residues 22-29; the sequence is NAGSHSPS. Asparagine 180 is an O-phospho-L-serine binding site. Lysine 243 is modified (N6-(pyridoxal phosphate)lysine). Residues arginine 354 and arginine 368 each coordinate O-phospho-L-serine.

Belongs to the class-II pyridoxal-phosphate-dependent aminotransferase family. In terms of assembly, homodimer. The cofactor is pyridoxal 5'-phosphate.

It carries out the reaction O-phospho-L-serine + H(+) = phosphoethanolamine + CO2. Its pathway is cofactor biosynthesis. Pyridoxal phosphate (PLP)-dependent decarboxylase involved in the biosynthesis of norcobamides, cofactors in the tetrachloroethene reductive dehalogenase PceA of S.multivorans. Catalyzes the decarboxylation of L-serine O-phosphate to ethanolamine O-phosphate, the precursor for the linkage between the nucleotide loop and the corrin ring in norcobamide. Less active with L-threonine phosphate. No activity with L-serine or L-threonine. Has no aminotransferase activity as no production of L-glutamate with L-histidinol phosphate and 2-oxoglutarate as substrates. Complements growth defects in the S.enterica cobD deletion mutant, but of the cobamides, the norpseudo-vitamin B12 (norpseudo-B12) rather than the pseudo-B12 is produced in the mutant. However, addition of L-threonine phosphate to the culture minimal medium of the mutant results in formation of also the pseudo-B12, indicating the dual substrate specificity of this enzyme. The sequence is that of L-serine phosphate decarboxylase from Sulfurospirillum multivorans (strain DM 12446 / JCM 15788 / NBRC 109480).